The chain runs to 196 residues: CASP-like protein 2U1 (196 aa).

The Cytoplasmic segment spans residues 1-11 (MAPMECVRRRN). Residues 12–32 (VGELVLRCAATLVCMLSLMLL) traverse the membrane as a helical segment. At 33–58 (VRDQQIAVQEVGVTSVTTQLRYSSST) the chain is on the extracellular side. A helical membrane pass occupies residues 59-79 (GLVYLVYANGLVALYCFVVVL). Topologically, residues 80-95 (TSSFNGGSVMRRNKSG) are cytoplasmic. A helical transmembrane segment spans residues 96–116 (AWALFVLDQVLACILLSAASA). At 117-148 (ASEIAFLVEKGAKKTIWDSKCIVYGHFCRMLE) the chain is on the extracellular side. The helical transmembrane segment at 149-169 (VSIATSFIAVIMLGSICVLSA) threads the bilayer. The Cytoplasmic segment spans residues 170 to 196 (KQLFQQYTHYARIVNMVKLKSTPNSLL).

The protein belongs to the Casparian strip membrane proteins (CASP) family. As to quaternary structure, homodimer and heterodimers.

It localises to the cell membrane. This is CASP-like protein 2U1 from Pteridium aquilinum subsp. aquilinum (Bracken fern).